Consider the following 288-residue polypeptide: Bifunctional protein FolD (288 aa).

NADP(+) contacts are provided by residues 171 to 173 (GRS), S196, and T237.

The protein belongs to the tetrahydrofolate dehydrogenase/cyclohydrolase family. Homodimer.

It catalyses the reaction (6R)-5,10-methylene-5,6,7,8-tetrahydrofolate + NADP(+) = (6R)-5,10-methenyltetrahydrofolate + NADPH. The catalysed reaction is (6R)-5,10-methenyltetrahydrofolate + H2O = (6R)-10-formyltetrahydrofolate + H(+). It functions in the pathway one-carbon metabolism; tetrahydrofolate interconversion. Its function is as follows. Catalyzes the oxidation of 5,10-methylenetetrahydrofolate to 5,10-methenyltetrahydrofolate and then the hydrolysis of 5,10-methenyltetrahydrofolate to 10-formyltetrahydrofolate. In Elusimicrobium minutum (strain Pei191), this protein is Bifunctional protein FolD.